A 105-amino-acid chain; its full sequence is Ketoisovalerate oxidoreductase subunit VorD (105 aa).

2 consecutive 4Fe-4S ferredoxin-type domains span residues 44 to 73 and 74 to 103; these read FKPVVNEEKCVKCYICWKYCPEPAIYIKPD and GYVAIDYDYCKGCGICANECPTKAITMIKE. Cys53, Cys56, Cys59, Cys63, Cys83, Cys86, Cys89, and Cys93 together coordinate [4Fe-4S] cluster.

In terms of assembly, heterotetramer of one alpha, one beta, one delta and one gamma chain. [4Fe-4S] cluster is required as a cofactor.

The enzyme catalyses 3-methyl-2-oxobutanoate + 2 oxidized [2Fe-2S]-[ferredoxin] + CoA = 2-methylpropanoyl-CoA + 2 reduced [2Fe-2S]-[ferredoxin] + CO2 + H(+). The protein is Ketoisovalerate oxidoreductase subunit VorD (vorD) of Pyrococcus furiosus (strain ATCC 43587 / DSM 3638 / JCM 8422 / Vc1).